Reading from the N-terminus, the 126-residue chain is Large ribosomal subunit protein bL20 (126 aa).

The protein belongs to the bacterial ribosomal protein bL20 family.

Functionally, binds directly to 23S ribosomal RNA and is necessary for the in vitro assembly process of the 50S ribosomal subunit. It is not involved in the protein synthesizing functions of that subunit. The sequence is that of Large ribosomal subunit protein bL20 from Nocardia farcinica (strain IFM 10152).